A 181-amino-acid polypeptide reads, in one-letter code: Ribosome maturation factor RimM (181 aa).

One can recognise a PRC barrel domain in the interval 103–181; that stretch reads EGDYYWSQLE…EMVVDWDPEF (79 aa).

The protein belongs to the RimM family. As to quaternary structure, binds ribosomal protein uS19.

Its subcellular location is the cytoplasm. Functionally, an accessory protein needed during the final step in the assembly of 30S ribosomal subunit, possibly for assembly of the head region. Essential for efficient processing of 16S rRNA. May be needed both before and after RbfA during the maturation of 16S rRNA. It has affinity for free ribosomal 30S subunits but not for 70S ribosomes. The polypeptide is Ribosome maturation factor RimM (Marinomonas sp. (strain MWYL1)).